A 428-amino-acid chain; its full sequence is Histidinol dehydrogenase (428 aa).

Tyrosine 127, glutamine 185, and asparagine 208 together coordinate NAD(+). Substrate-binding residues include serine 234, glutamine 256, and histidine 259. Zn(2+)-binding residues include glutamine 256 and histidine 259. Active-site proton acceptor residues include glutamate 323 and histidine 324. Substrate contacts are provided by histidine 324, aspartate 357, glutamate 411, and histidine 416. Aspartate 357 is a Zn(2+) binding site. A Zn(2+)-binding site is contributed by histidine 416.

It belongs to the histidinol dehydrogenase family. The cofactor is Zn(2+).

It catalyses the reaction L-histidinol + 2 NAD(+) + H2O = L-histidine + 2 NADH + 3 H(+). Its pathway is amino-acid biosynthesis; L-histidine biosynthesis; L-histidine from 5-phospho-alpha-D-ribose 1-diphosphate: step 9/9. Its function is as follows. Catalyzes the sequential NAD-dependent oxidations of L-histidinol to L-histidinaldehyde and then to L-histidine. In Mannheimia succiniciproducens (strain KCTC 0769BP / MBEL55E), this protein is Histidinol dehydrogenase.